Consider the following 264-residue polypeptide: Elongation factor Ts (264 aa).

Residues 76-79 (TDFV) form an involved in Mg(2+) ion dislocation from EF-Tu region.

It belongs to the EF-Ts family.

It localises to the cytoplasm. In terms of biological role, associates with the EF-Tu.GDP complex and induces the exchange of GDP to GTP. It remains bound to the aminoacyl-tRNA.EF-Tu.GTP complex up to the GTP hydrolysis stage on the ribosome. This chain is Elongation factor Ts, found in Deinococcus radiodurans (strain ATCC 13939 / DSM 20539 / JCM 16871 / CCUG 27074 / LMG 4051 / NBRC 15346 / NCIMB 9279 / VKM B-1422 / R1).